The sequence spans 505 residues: MLWAGGMRLGMARILLMLVHAAAACEFGPMPYSVTGIVFRMTKPAALLLNQETARLIQASFKHAKFPNITGERSMRFLGTVAYTLANIQVSDLSIEQSEVELKENDAIDIAIKNVTAFFRGTLTYGYAGAWFLQLFHSVDFEIQSSIDLQINIKLLCQEEQVAADASDCYLSFHKLMLHLQGDKEPGWLKQLFTDFISFTLKFVLKRELCKEINLLAQVMANFVHNVAENFVQDEAIGLDISLASDPLIKANYLESHHEGLVLYKNYSDVLSDSVFSPSLLSESRMLYFWISEHILNSLASAAFLDGRLVLAIRGEKLQALFEFEDTEAQQKAVHLIFQGNSYNDSVAKVWSLALPEISLQPEGTVVKSLVAVEISIFPPGEEPLTALYMEEEITVTIQAAYVEKKLILRPVDSQIEFKVFNCTADPSGNDQSVRNFLQKMISAVGIPEVISKIEPALTSLMNSKGLHLFEIKNPEIITRKRYLIVQLDFSFPNHLLLDFLEKTL.

An N-terminal signal peptide occupies residues 1–24; it reads MLWAGGMRLGMARILLMLVHAAAA. N-linked (GlcNAc...) asparagine glycans are attached at residues Asn68 and Asn114. The cysteines at positions 169 and 210 are disulfide-linked. Asn266, Asn344, and Asn422 each carry an N-linked (GlcNAc...) asparagine glycan.

This sequence belongs to the BPI/LBP/Plunc superfamily. BPI/LBP family. In terms of tissue distribution, highly expressed in liver brain, heart, and spleen. Secreted in plasma.

The protein resides in the secreted. The catalysed reaction is cholesteryl (9Z-octadecenoate)(in) = cholesteryl (9Z-octadecenoate)(out). The enzyme catalyses 1,2,3-tri-(9Z-octadecenoyl)-glycerol(in) = 1,2,3-tri-(9Z-octadecenoyl)-glycerol(out). It carries out the reaction cholesteryl (9Z,12Z)-octadecadienoate(in) = cholesteryl (9Z,12Z)-octadecadienoate(out). Involved in the transfer of neutral lipids, including cholesteryl ester and triglyceride, among lipoprotein particles. Allows the net movement of cholesteryl ester from high density lipoproteins/HDL to triglyceride-rich very low density lipoproteins/VLDL, and the equimolar transport of triglyceride from VLDL to HDL. Regulates the reverse cholesterol transport, by which excess cholesterol is removed from peripheral tissues and returned to the liver for elimination. The chain is Cholesteryl ester transfer protein from Gallus gallus (Chicken).